Reading from the N-terminus, the 330-residue chain is ADP-L-glycero-D-manno-heptose-6-epimerase (330 aa).

Residues 11-12 (FI), 32-33 (DN), Lys-39, Lys-54, 75-79 (EGACS), and Asn-92 contribute to the NADP(+) site. Catalysis depends on Tyr-139, which acts as the Proton acceptor. Lys-143 provides a ligand contact to NADP(+). Asn-168 is a substrate binding site. 2 residues coordinate NADP(+): Val-169 and Lys-177. The Proton acceptor role is filled by Lys-177. Residues Arg-179, His-186, 200 to 203 (FGEY), Arg-213, and Tyr-292 each bind substrate.

The protein belongs to the NAD(P)-dependent epimerase/dehydratase family. HldD subfamily. As to quaternary structure, homopentamer. NADP(+) serves as cofactor.

The enzyme catalyses ADP-D-glycero-beta-D-manno-heptose = ADP-L-glycero-beta-D-manno-heptose. The protein operates within nucleotide-sugar biosynthesis; ADP-L-glycero-beta-D-manno-heptose biosynthesis; ADP-L-glycero-beta-D-manno-heptose from D-glycero-beta-D-manno-heptose 7-phosphate: step 4/4. In terms of biological role, catalyzes the interconversion between ADP-D-glycero-beta-D-manno-heptose and ADP-L-glycero-beta-D-manno-heptose via an epimerization at carbon 6 of the heptose. The polypeptide is ADP-L-glycero-D-manno-heptose-6-epimerase (Burkholderia ambifaria (strain ATCC BAA-244 / DSM 16087 / CCUG 44356 / LMG 19182 / AMMD) (Burkholderia cepacia (strain AMMD))).